Consider the following 624-residue polypeptide: Chaperone protein HtpG (624 aa).

An a; substrate-binding region spans residues 1–336 (MKGQETRGFQ…SSDLPLNVSR (336 aa)). The b stretch occupies residues 337–552 (EILQDSTVTR…ADEMSTQMAK (216 aa)). The interval 553-624 (LFAAAGQKVP…IRRMNQLLVS (72 aa)) is c.

It belongs to the heat shock protein 90 family. Homodimer.

It localises to the cytoplasm. Functionally, molecular chaperone. Has ATPase activity. This is Chaperone protein HtpG from Escherichia coli O139:H28 (strain E24377A / ETEC).